Reading from the N-terminus, the 421-residue chain is UDP-N-acetylglucosamine 1-carboxyvinyltransferase (421 aa).

Lysine 22 to asparagine 23 contacts phosphoenolpyruvate. Position 94 (arginine 94) interacts with UDP-N-acetyl-alpha-D-glucosamine. Catalysis depends on cysteine 118, which acts as the Proton donor. Cysteine 118 bears the 2-(S-cysteinyl)pyruvic acid O-phosphothioketal mark. UDP-N-acetyl-alpha-D-glucosamine is bound by residues lysine 163–valine 166, aspartate 308, and isoleucine 330.

The protein belongs to the EPSP synthase family. MurA subfamily.

The protein localises to the cytoplasm. It catalyses the reaction phosphoenolpyruvate + UDP-N-acetyl-alpha-D-glucosamine = UDP-N-acetyl-3-O-(1-carboxyvinyl)-alpha-D-glucosamine + phosphate. Its pathway is cell wall biogenesis; peptidoglycan biosynthesis. Cell wall formation. Adds enolpyruvyl to UDP-N-acetylglucosamine. The sequence is that of UDP-N-acetylglucosamine 1-carboxyvinyltransferase from Orientia tsutsugamushi (strain Boryong) (Rickettsia tsutsugamushi).